Here is an 863-residue protein sequence, read N- to C-terminus: Alanine--tRNA ligase (863 aa).

4 residues coordinate Zn(2+): H552, H556, C654, and H658.

This sequence belongs to the class-II aminoacyl-tRNA synthetase family. The cofactor is Zn(2+).

It localises to the cytoplasm. It catalyses the reaction tRNA(Ala) + L-alanine + ATP = L-alanyl-tRNA(Ala) + AMP + diphosphate. Functionally, catalyzes the attachment of alanine to tRNA(Ala) in a two-step reaction: alanine is first activated by ATP to form Ala-AMP and then transferred to the acceptor end of tRNA(Ala). Also edits incorrectly charged Ser-tRNA(Ala) and Gly-tRNA(Ala) via its editing domain. This is Alanine--tRNA ligase from Nitrosomonas europaea (strain ATCC 19718 / CIP 103999 / KCTC 2705 / NBRC 14298).